A 522-amino-acid chain; its full sequence is Cytochrome P450 714C2 (522 aa).

At 1 to 11 (MELFSSQQWLA) the chain is on the lumenal side. The chain crosses the membrane as a helical; Signal-anchor for type III membrane protein span at residues 12 to 32 (LLPPIILCILLFSYVYIILWL). Over 33–522 (RPERLRQKLR…KGVPLIFREL (490 aa)) the chain is Cytoplasmic. Cys470 is a heme binding site.

It belongs to the cytochrome P450 family. Heme serves as cofactor.

It localises to the membrane. Functionally, probably not involved in gibberellin metabolism since over-expression of CYP714C2 in a heterologous system does not induce semi-dwarfism. The chain is Cytochrome P450 714C2 (CYP714C2) from Oryza sativa subsp. japonica (Rice).